The primary structure comprises 244 residues: CTD nuclear envelope phosphatase 1 (244 aa).

Residues 7–29 (LLGLRGFVAFAAKLWSFVLYLLR) form a helical membrane-spanning segment. The 168-residue stretch at 57-224 (SQVKRKVLVL…LNLLPMLDAL (168 aa)) folds into the FCP1 homology domain.

It belongs to the dullard family. As to quaternary structure, interacts with bmpr1a, bmpr1b and bmpr2.

It localises to the membrane. It is found in the cytoplasm. The protein resides in the perinuclear region. The enzyme catalyses O-phospho-L-seryl-[protein] + H2O = L-seryl-[protein] + phosphate. The catalysed reaction is O-phospho-L-threonyl-[protein] + H2O = L-threonyl-[protein] + phosphate. In terms of biological role, serine/threonine protein phosphatase that may dephosphorylate and activate lipins. Lipins are phosphatidate phosphatases that catalyze the conversion of phosphatidic acid to diacylglycerol and control the metabolism of fatty acids at different levels. May indirectly modulate the lipid composition of nuclear and/or endoplasmic reticulum membranes and be required for proper nuclear membrane morphology and/or dynamics. May also indirectly regulate the production of lipid droplets and triacylglycerol. Induces neuronal differentiation by antagonizing BMP signaling. Acts both by dephosphorylating BMPR1A and by promoting BMPR2 proteasomal degradation. In Xenopus tropicalis (Western clawed frog), this protein is CTD nuclear envelope phosphatase 1 (ctdnep1).